Reading from the N-terminus, the 187-residue chain is Ribonuclease HII (187 aa).

In terms of domain architecture, RNase H type-2 spans 1-187 (MICGTDEAGR…NPVKRLLANL (187 aa)). 3 residues coordinate a divalent metal cation: Asp6, Glu7, and Asp98.

It belongs to the RNase HII family. It depends on Mn(2+) as a cofactor. Mg(2+) is required as a cofactor.

The protein localises to the cytoplasm. The catalysed reaction is Endonucleolytic cleavage to 5'-phosphomonoester.. In terms of biological role, endonuclease that specifically degrades the RNA of RNA-DNA hybrids. In Idiomarina loihiensis (strain ATCC BAA-735 / DSM 15497 / L2-TR), this protein is Ribonuclease HII.